Reading from the N-terminus, the 95-residue chain is MKISKQDVEHLAHLARLAVDGSQVESLTAQVSNILDYMDVLKEVDVDGVPLASGAALGTNVFRQDQVKPSPGPCVTLANAPERDDDFYTVPRIVG.

It belongs to the GatC family. Heterotrimer of A, B and C subunits.

It catalyses the reaction L-glutamyl-tRNA(Gln) + L-glutamine + ATP + H2O = L-glutaminyl-tRNA(Gln) + L-glutamate + ADP + phosphate + H(+). The catalysed reaction is L-aspartyl-tRNA(Asn) + L-glutamine + ATP + H2O = L-asparaginyl-tRNA(Asn) + L-glutamate + ADP + phosphate + 2 H(+). Allows the formation of correctly charged Asn-tRNA(Asn) or Gln-tRNA(Gln) through the transamidation of misacylated Asp-tRNA(Asn) or Glu-tRNA(Gln) in organisms which lack either or both of asparaginyl-tRNA or glutaminyl-tRNA synthetases. The reaction takes place in the presence of glutamine and ATP through an activated phospho-Asp-tRNA(Asn) or phospho-Glu-tRNA(Gln). This is Aspartyl/glutamyl-tRNA(Asn/Gln) amidotransferase subunit C from Desulforapulum autotrophicum (strain ATCC 43914 / DSM 3382 / VKM B-1955 / HRM2) (Desulfobacterium autotrophicum).